The primary structure comprises 207 residues: Thiamine-phosphate synthase (207 aa).

4-amino-2-methyl-5-(diphosphooxymethyl)pyrimidine contacts are provided by residues 38–42 and Asn-70; that span reads QYRAK. Mg(2+) contacts are provided by Asp-71 and Asp-90. Thr-109 is a 4-amino-2-methyl-5-(diphosphooxymethyl)pyrimidine binding site. Position 135–137 (135–137) interacts with 2-[(2R,5Z)-2-carboxy-4-methylthiazol-5(2H)-ylidene]ethyl phosphate; sequence TNS. Position 138 (Lys-138) interacts with 4-amino-2-methyl-5-(diphosphooxymethyl)pyrimidine. 2-[(2R,5Z)-2-carboxy-4-methylthiazol-5(2H)-ylidene]ethyl phosphate is bound by residues Gly-165 and 185–186; that span reads IS.

This sequence belongs to the thiamine-phosphate synthase family. It depends on Mg(2+) as a cofactor.

It carries out the reaction 2-[(2R,5Z)-2-carboxy-4-methylthiazol-5(2H)-ylidene]ethyl phosphate + 4-amino-2-methyl-5-(diphosphooxymethyl)pyrimidine + 2 H(+) = thiamine phosphate + CO2 + diphosphate. The catalysed reaction is 2-(2-carboxy-4-methylthiazol-5-yl)ethyl phosphate + 4-amino-2-methyl-5-(diphosphooxymethyl)pyrimidine + 2 H(+) = thiamine phosphate + CO2 + diphosphate. The enzyme catalyses 4-methyl-5-(2-phosphooxyethyl)-thiazole + 4-amino-2-methyl-5-(diphosphooxymethyl)pyrimidine + H(+) = thiamine phosphate + diphosphate. Its pathway is cofactor biosynthesis; thiamine diphosphate biosynthesis; thiamine phosphate from 4-amino-2-methyl-5-diphosphomethylpyrimidine and 4-methyl-5-(2-phosphoethyl)-thiazole: step 1/1. Condenses 4-methyl-5-(beta-hydroxyethyl)thiazole monophosphate (THZ-P) and 2-methyl-4-amino-5-hydroxymethyl pyrimidine pyrophosphate (HMP-PP) to form thiamine monophosphate (TMP). The protein is Thiamine-phosphate synthase of Clostridium perfringens (strain 13 / Type A).